The chain runs to 468 residues: MAVANDYIVKDIGLADYGRKEISIAETEMPGLMSTRAEYGASQPLKGAKIAGSLHMTIQTAVLIETLKALGADIRWVSCNIYSTQDHAAAAIAAAGIPVFAVKGETLTEYWDYTSKLFDWHDGGMPNMILDDGGDATMFVHLGLRAENGDTAFLDKPESEEEEVFFALLKKKLAEKPKGWFAGLADSIKGVSEETTTGVHRLYNLAKEGKLLFPAINVNDSVTKSKFDNLYGCKESLVDGIRRGTDVMMAGKVAMVAGFGDVGKGSAASLRNAGCRVLVSEIDPICALQAAMEGYEVVTMEDAAPRADIFVTATGNKDIITIEHMRAMKDRAIVCNIGHFDNEIQVAGLKNLKWQNIKPQVDEIEFADGHRIILLSEGRLVNLGNATGHPSFVMSASFTNQTLAQIELWTNPGKYERQVYTLPKALDEKVAALHLEKIGVKLSKLRPDQAAYIGVSQTGPFKPEHYRY.

Residues Thr-57, Asp-132, and Glu-194 each contribute to the substrate site. Thr-195–Thr-197 serves as a coordination point for NAD(+). Substrate is bound by residues Lys-224 and Asp-228. Residues Asn-229, Gly-258–Gly-263, Glu-281, Asn-316, Ile-337–His-339, and Asn-382 each bind NAD(+).

It belongs to the adenosylhomocysteinase family. NAD(+) serves as cofactor.

The protein localises to the cytoplasm. It catalyses the reaction S-adenosyl-L-homocysteine + H2O = L-homocysteine + adenosine. It participates in amino-acid biosynthesis; L-homocysteine biosynthesis; L-homocysteine from S-adenosyl-L-homocysteine: step 1/1. May play a key role in the regulation of the intracellular concentration of adenosylhomocysteine. In Methylorubrum extorquens (strain CM4 / NCIMB 13688) (Methylobacterium extorquens), this protein is Adenosylhomocysteinase.